Reading from the N-terminus, the 298-residue chain is Protoheme IX farnesyltransferase (298 aa).

Transmembrane regions (helical) follow at residues 28–48, 50–70, 95–117, 121–138, 149–169, 176–196, 222–242, 243–263, and 274–294; these read VVAL…EELV, LKVL…AAAI, LSPA…TLYA, PLTA…AVVY, NIVI…TSVT, AVLL…ALAV, CIFL…LIGM, TGMI…AYAW, and AFNM…ILLV.

It belongs to the UbiA prenyltransferase family. Protoheme IX farnesyltransferase subfamily.

It localises to the cell inner membrane. It carries out the reaction heme b + (2E,6E)-farnesyl diphosphate + H2O = Fe(II)-heme o + diphosphate. Its pathway is porphyrin-containing compound metabolism; heme O biosynthesis; heme O from protoheme: step 1/1. Functionally, converts heme B (protoheme IX) to heme O by substitution of the vinyl group on carbon 2 of heme B porphyrin ring with a hydroxyethyl farnesyl side group. In Idiomarina loihiensis (strain ATCC BAA-735 / DSM 15497 / L2-TR), this protein is Protoheme IX farnesyltransferase.